The following is a 428-amino-acid chain: Glutamate-1-semialdehyde 2,1-aminomutase 1 (428 aa).

At Lys268 the chain carries N6-(pyridoxal phosphate)lysine.

Belongs to the class-III pyridoxal-phosphate-dependent aminotransferase family. HemL subfamily. As to quaternary structure, homodimer. Pyridoxal 5'-phosphate serves as cofactor.

The protein resides in the cytoplasm. It catalyses the reaction (S)-4-amino-5-oxopentanoate = 5-aminolevulinate. Its pathway is porphyrin-containing compound metabolism; protoporphyrin-IX biosynthesis; 5-aminolevulinate from L-glutamyl-tRNA(Glu): step 2/2. This Bacillus cereus (strain G9842) protein is Glutamate-1-semialdehyde 2,1-aminomutase 1.